Reading from the N-terminus, the 357-residue chain is 3-isopropylmalate dehydrogenase (357 aa).

Glycine 76–glutamate 89 is an NAD(+) binding site. The substrate site is built by arginine 96, arginine 106, arginine 134, and aspartate 224. Aspartate 224, aspartate 248, and aspartate 252 together coordinate Mg(2+). Glycine 282–asparagine 294 contributes to the NAD(+) binding site.

Belongs to the isocitrate and isopropylmalate dehydrogenases family. LeuB type 1 subfamily. As to quaternary structure, homodimer. It depends on Mg(2+) as a cofactor. The cofactor is Mn(2+).

Its subcellular location is the cytoplasm. The enzyme catalyses (2R,3S)-3-isopropylmalate + NAD(+) = 4-methyl-2-oxopentanoate + CO2 + NADH. Its pathway is amino-acid biosynthesis; L-leucine biosynthesis; L-leucine from 3-methyl-2-oxobutanoate: step 3/4. Catalyzes the oxidation of 3-carboxy-2-hydroxy-4-methylpentanoate (3-isopropylmalate) to 3-carboxy-4-methyl-2-oxopentanoate. The product decarboxylates to 4-methyl-2 oxopentanoate. The chain is 3-isopropylmalate dehydrogenase from Xanthomonas oryzae pv. oryzae (strain MAFF 311018).